A 173-amino-acid chain; its full sequence is Nanos homolog 3 (173 aa).

The disordered stretch occupies residues 23-51 (KEGPETRLSPQPEPEPMLEPDQKRSLESS). A Nanos-type zinc finger spans residues 57–111 (LCSFCKHNGESRAIYQSHVLKDEAGRVLCPILRDYVCPQCGATRERAHTRRFCPL). 8 residues coordinate Zn(2+): cysteine 58, cysteine 61, histidine 74, cysteine 85, cysteine 93, cysteine 96, histidine 104, and cysteine 109. Short sequence motifs (C2HC) lie at residues 58–85 (CSFCKHNGESRAIYQSHVLKDEAGRVLC) and 93–109 (CPQCGATRERAHTRRFC). The tract at residues 123–173 (TTRNSAGKKLVRPDKAKTQDTGHRRGGGGGAGFRGAGKSEPSPSCSPSMST) is disordered. Positions 133 to 145 (VRPDKAKTQDTGH) are enriched in basic and acidic residues. Over residues 161–173 (SEPSPSCSPSMST) the composition is skewed to low complexity.

The protein belongs to the nanos family. In terms of assembly, binds mRNA from germ cells. Interacts with PUM2. As to expression, ovary, testis and brain (at protein level). In the ovaries, expressed during multiple stages of oogenesis, including primordial, primary, secondary and antral follicles with the highest expression in the oocytes. In the testis, expressed in germ cells, type A spermatogonia (SA), primary spermatocytes (S1), round spermatids (S3) and elongated spermatids.

It localises to the nucleus. The protein resides in the cytoplasm. The protein localises to the stress granule. It is found in the P-body. In terms of biological role, plays a role in the maintenance of the undifferentiated state of germ cells regulating the spermatogonia cell cycle and inducing a prolonged transit in G1 phase. Affects cell proliferation probably by repressing translation of specific mRNAs. Maintains the germ cell lineage by suppressing both Bax-dependent and -independent apoptotic pathways. Essential in the early stage embryo to protect the migrating primordial germ cells (PGCs) from apoptosis. In Homo sapiens (Human), this protein is Nanos homolog 3 (NANOS3).